A 745-amino-acid polypeptide reads, in one-letter code: Protein transport protein SEC23 D (745 aa).

Zn(2+) contacts are provided by cysteine 53, cysteine 56, cysteine 73, and cysteine 76. Residues 53-76 form a zinc finger-like region; it reads CENCYAYFNTYCELDQWAWNCSLC.

This sequence belongs to the SEC23/SEC24 family. SEC24 subfamily. Component of the coat protein complex II (COPII), composed of at least five proteins: the Sec23/24 complex, the Sec13/31 complex and Sar1. As to expression, mostly expressed in closed floral bud, pollen and flowers, and, to a lower extent, in mature siliques, roots and leaf primordia.

Its subcellular location is the cytoplasmic vesicle. The protein resides in the COPII-coated vesicle membrane. It localises to the endoplasmic reticulum membrane. It is found in the membrane. Component of the coat protein complex II (COPII) which promotes the formation of transport vesicles from the endoplasmic reticulum (ER). The coat has two main functions, the physical deformation of the endoplasmic reticulum membrane into vesicles and the selection of cargo molecules. May contribute to COPII-coated vesicles formation and ER-Golgi vesicle transport. Together with SEC23A, essential for pollen wall development and exine patterning, probably by regulating endoplasmic reticulum (ER) export of lipids and proteins (e.g. sporopollenin) necessary for pollen wall formation. Also involved in plastid physiology in anther tapetal cells. In Arabidopsis thaliana (Mouse-ear cress), this protein is Protein transport protein SEC23 D.